Reading from the N-terminus, the 372-residue chain is 4-hydroxy-3-methylbut-2-en-1-yl diphosphate synthase (flavodoxin) (372 aa).

Residues Cys270, Cys273, Cys305, and Glu312 each contribute to the [4Fe-4S] cluster site.

It belongs to the IspG family. Requires [4Fe-4S] cluster as cofactor.

The catalysed reaction is (2E)-4-hydroxy-3-methylbut-2-enyl diphosphate + oxidized [flavodoxin] + H2O + 2 H(+) = 2-C-methyl-D-erythritol 2,4-cyclic diphosphate + reduced [flavodoxin]. It participates in isoprenoid biosynthesis; isopentenyl diphosphate biosynthesis via DXP pathway; isopentenyl diphosphate from 1-deoxy-D-xylulose 5-phosphate: step 5/6. Functionally, converts 2C-methyl-D-erythritol 2,4-cyclodiphosphate (ME-2,4cPP) into 1-hydroxy-2-methyl-2-(E)-butenyl 4-diphosphate. The sequence is that of 4-hydroxy-3-methylbut-2-en-1-yl diphosphate synthase (flavodoxin) from Shewanella amazonensis (strain ATCC BAA-1098 / SB2B).